The primary structure comprises 500 residues: MEFTIKTGTPEKLKTGSVVVGVFADGQLGDAAAALDKASKGKFAAILGRGDLEDKAGSLLAIHDLPGSACERVLAVSLGKRDEFGDKAWRDALVAIGKALASGAASDVAVCLTDTPVPGRDIDWVLQQLVRAIADGAYRFDATKSKDKGKDSKRRGAGKVVLLTREITASMEAAIQRGQAIAEGMALAKDLGNLPGNFCTPSYLADTAVALGKQYKLKVEVLDRDDMEKLGMGSLLSVARGSHQPPRFIVMHYKGGKSKDKPVVLVGKGITFDSGGISLKPGAEMDEMKFDMCGAASVLGTFKAIARMALPINVVGLIPTTENMPGGGATKPGDVVTSMSGQTIEILNTDAEGRLILCDALTYAERFKPACVVDIATLTGACVVALGKIPSGLLANDDALARELLDCGTVSGDRAWQLPLWDEYQELLKSNFADMGNIGGRFAGTITAACFLARFTKAYKWAHLDIAGTAWVSGDAKGATGRPVPLLAEFLIARSQGAPG.

Mn(2+) contacts are provided by K268 and D273. K280 is a catalytic residue. Residues D291, D350, and E352 each contribute to the Mn(2+) site. Residue R354 is part of the active site.

It belongs to the peptidase M17 family. The cofactor is Mn(2+).

The protein localises to the cytoplasm. The enzyme catalyses Release of an N-terminal amino acid, Xaa-|-Yaa-, in which Xaa is preferably Leu, but may be other amino acids including Pro although not Arg or Lys, and Yaa may be Pro. Amino acid amides and methyl esters are also readily hydrolyzed, but rates on arylamides are exceedingly low.. The catalysed reaction is Release of an N-terminal amino acid, preferentially leucine, but not glutamic or aspartic acids.. Presumably involved in the processing and regular turnover of intracellular proteins. Catalyzes the removal of unsubstituted N-terminal amino acids from various peptides. The protein is Probable cytosol aminopeptidase of Aromatoleum aromaticum (strain DSM 19018 / LMG 30748 / EbN1) (Azoarcus sp. (strain EbN1)).